Reading from the N-terminus, the 220-residue chain is MHSRLATARLYLCTDARRERGDLADFADAALAGGVDIIQLRDKGSAGEQRFGPLEARDELAACEILADAAARHAAMFAVNDRADIARAARADVLHLGQRDLPVDVARAITGPATLIGQSTHDRDQVSAAAIGAVDYFCVGPCWPTPTKPGRTAPGLDLVRFAADVAGAKPWFAIGGIDGLRLPEVLAAGARRIVVVRAITAADDPREAAAKLKSELLAAI.

4-amino-2-methyl-5-(diphosphooxymethyl)pyrimidine contacts are provided by residues 39–43 and N80; that span reads QLRDK. Mg(2+) contacts are provided by D81 and D100. S119 serves as a coordination point for 4-amino-2-methyl-5-(diphosphooxymethyl)pyrimidine. Residue 145 to 147 coordinates 2-[(2R,5Z)-2-carboxy-4-methylthiazol-5(2H)-ylidene]ethyl phosphate; sequence TPT. 4-amino-2-methyl-5-(diphosphooxymethyl)pyrimidine is bound at residue K148. G176 contacts 2-[(2R,5Z)-2-carboxy-4-methylthiazol-5(2H)-ylidene]ethyl phosphate.

This sequence belongs to the thiamine-phosphate synthase family. Mg(2+) is required as a cofactor.

The catalysed reaction is 2-[(2R,5Z)-2-carboxy-4-methylthiazol-5(2H)-ylidene]ethyl phosphate + 4-amino-2-methyl-5-(diphosphooxymethyl)pyrimidine + 2 H(+) = thiamine phosphate + CO2 + diphosphate. It catalyses the reaction 2-(2-carboxy-4-methylthiazol-5-yl)ethyl phosphate + 4-amino-2-methyl-5-(diphosphooxymethyl)pyrimidine + 2 H(+) = thiamine phosphate + CO2 + diphosphate. The enzyme catalyses 4-methyl-5-(2-phosphooxyethyl)-thiazole + 4-amino-2-methyl-5-(diphosphooxymethyl)pyrimidine + H(+) = thiamine phosphate + diphosphate. It participates in cofactor biosynthesis; thiamine diphosphate biosynthesis; thiamine phosphate from 4-amino-2-methyl-5-diphosphomethylpyrimidine and 4-methyl-5-(2-phosphoethyl)-thiazole: step 1/1. Condenses 4-methyl-5-(beta-hydroxyethyl)thiazole monophosphate (THZ-P) and 2-methyl-4-amino-5-hydroxymethyl pyrimidine pyrophosphate (HMP-PP) to form thiamine monophosphate (TMP). In Mycobacterium ulcerans (strain Agy99), this protein is Thiamine-phosphate synthase.